The sequence spans 36 residues: Photosystem I reaction center subunit VIII (36 aa).

The helical transmembrane segment at 10–30 threads the bilayer; sequence FVPLVGLVFSAIIMVLSFLYI.

It belongs to the PsaI family.

It is found in the plastid. The protein resides in the chloroplast thylakoid membrane. Functionally, may help in the organization of the PsaL subunit. The chain is Photosystem I reaction center subunit VIII from Welwitschia mirabilis (Tree tumbo).